An 862-amino-acid chain; its full sequence is Cytosolic carboxypeptidase 2 (862 aa).

The region spanning 359 to 629 (YPYTYTDLQC…HVCDTLLDFC (271 aa)) is the Peptidase M14 domain. The Zn(2+) site is built by His-425, Glu-428, and His-521. The active-site Proton donor/acceptor is Glu-593. Disordered regions lie at residues 669–692 (SDIP…DGPP), 704–728 (NQKT…EQYQ), and 750–836 (STLQ…PNWS). Positions 674–689 (SDIESSTSGSDSSLSD) are enriched in low complexity. The segment covering 711-721 (NPKKKRLQTRK) has biased composition (basic residues). A compositionally biased stretch (polar residues) spans 813-825 (ASCSPKRSTNSSL).

It belongs to the peptidase M14 family. As to quaternary structure, interacts with RARRES1, KIF11 and MAPRE1. The cofactor is Zn(2+). Widely expressed. Expressed in tissues with motile cilia such as testis, lung and trachea. Also detected in brain, eye, muscle, pancreas, intestine, stomach, pituitary, spleen, adrenal and kidney. Expressed in mitral and granular cells in brain.

Its subcellular location is the cytoplasm. The protein resides in the cytosol. It is found in the cytoskeleton. The protein localises to the microtubule organizing center. It localises to the centrosome. Its subcellular location is the centriole. The protein resides in the cilium basal body. It carries out the reaction (L-glutamyl)(n+1)-gamma-L-glutamyl-L-glutamyl-[protein] + H2O = (L-glutamyl)(n)-gamma-L-glutamyl-L-glutamyl-[protein] + L-glutamate. With respect to regulation, inhibited by RARRES1. Functionally, metallocarboxypeptidase that mediates deglutamylation of tubulin and non-tubulin target proteins. Catalyzes the removal of polyglutamate side chains present on the gamma-carboxyl group of glutamate residues within the C-terminal tail of tubulin protein. Specifically cleaves tubulin long-side-chains, while it is not able to remove the branching point glutamate. Also catalyzes the removal of polyglutamate residues from the carboxy-terminus of non-tubulin proteins such as MYLK. The sequence is that of Cytosolic carboxypeptidase 2 from Mus musculus (Mouse).